The sequence spans 337 residues: Alanine racemase (337 aa).

K33 (proton acceptor; specific for D-alanine) is an active-site residue. Position 33 is an N6-(pyridoxal phosphate)lysine (K33). Residue R118 coordinates substrate. Residue Y246 is the Proton acceptor; specific for L-alanine of the active site. M292 contributes to the substrate binding site.

The protein belongs to the alanine racemase family. Pyridoxal 5'-phosphate serves as cofactor.

The enzyme catalyses L-alanine = D-alanine. It functions in the pathway amino-acid biosynthesis; D-alanine biosynthesis; D-alanine from L-alanine: step 1/1. In terms of biological role, catalyzes the interconversion of L-alanine and D-alanine. May also act on other amino acids. The protein is Alanine racemase (alr) of Campylobacter concisus (strain 13826).